Consider the following 363-residue polypeptide: MAMVLENSSAELLRALAHLSNKRGNFKDGAALKCAVELGIPDVIQKHGKPAMTLSELTAALPIKQSKAHCINRIMRVLVNAGFFVEQRSGDGKRDDEEESYALTPACRLLLKDEPLNARAHVLFTLDPAEMVALGSLSEWLQDDYPTAFETANGKNYWDYIAERPARNKLFNEALAVDSRLIATVLISEFKFVFEGLTSLVDVGGGTGTIARAIAETFPNMKCIVLDLQQVVEDADLEGTENLEFVAGDMFEKIPNANAILLKMVLHDWSDEDCVRILKNCKRVIPEKEKGGKIILIELVLGGQNKDHVTVEAEICMDMEMLASFGGKERTEKEWAKLFQDAGLSGYKVFSNLDSRCVIEVYP.

Residues G204, D227, D249, M250, and K263 each coordinate S-adenosyl-L-methionine. Catalysis depends on H267, which acts as the Proton acceptor.

Belongs to the class I-like SAM-binding methyltransferase superfamily. Cation-independent O-methyltransferase family.

The catalysed reaction is 10-hydroxystrychnine + S-adenosyl-L-methionine = beta-colubrine + S-adenosyl-L-homocysteine + H(+). It catalyses the reaction 11-demethylbrucine + S-adenosyl-L-methionine = brucine + S-adenosyl-L-homocysteine + H(+). Its pathway is alkaloid biosynthesis. Functionally, O-methyltransferase involved in the biosynthesis of curare monoterpene indole alkaloids (MIAs), natural products such as strychnine, a neurotoxic compound used as a pesticide to control rodents, and its pharmacologically active derivatives, including brucine, used to regulate blood pressure. Curare alkaloids act as animal glycine receptor antagonists. Catalyzes the conversion of 10-OH strychnine to beta-colubrine, and of 11-deMe brucine to brucine. In Strychnos nux-vomica (Poison nut), this protein is Strychnine O-methyltransferase.